Consider the following 253-residue polypeptide: MKDCCGGYESEELLMDFSGKDKAAYVQDTFNSIAKRYDVMNTLMSFGLDKGWRKKAVQTVEAKPGMTMVDICCGTAQLSLELAMTVGEQGQITGLDFSENMLKKAQENLAGSPYRSIIELRQGDAMNLPFADNSFDGATVGWGLRNLPDLEKGVQEMIRVVKPGGMVVSLDMAKPTMPGFKQGYWLYFNKLVPLMGKIWAGKAKAYQYLHDSAVEFPSQQELANIFARCGLTETRYQNLAGGVVAIVSGRKPR.

S-adenosyl-L-methionine contacts are provided by residues T75, D96, and 124–125 (DA).

It belongs to the class I-like SAM-binding methyltransferase superfamily. MenG/UbiE family.

The enzyme catalyses a 2-demethylmenaquinol + S-adenosyl-L-methionine = a menaquinol + S-adenosyl-L-homocysteine + H(+). Its pathway is quinol/quinone metabolism; menaquinone biosynthesis; menaquinol from 1,4-dihydroxy-2-naphthoate: step 2/2. In terms of biological role, methyltransferase required for the conversion of demethylmenaquinol (DMKH2) to menaquinol (MKH2). The sequence is that of Demethylmenaquinone methyltransferase from Desulfitobacterium hafniense (strain Y51).